A 141-amino-acid chain; its full sequence is Lysozyme 1 (141 aa).

The signal sequence occupies residues 1 to 19 (MKFFIVLVAALALAAPAMG). Residues 20-141 (KTFTRCSLAR…GSLPSINDCF (122 aa)) form the C-type lysozyme domain. 4 cysteine pairs are disulfide-bonded: cysteine 25/cysteine 140, cysteine 46/cysteine 130, cysteine 81/cysteine 97, and cysteine 93/cysteine 111. Residue glutamate 51 is part of the active site. Asparagine 65 is a glycosylation site (N-linked (GlcNAc...) asparagine). The active site involves aspartate 69. An N-linked (GlcNAc...) asparagine glycan is attached at asparagine 104.

Belongs to the glycosyl hydrolase 22 family.

The enzyme catalyses Hydrolysis of (1-&gt;4)-beta-linkages between N-acetylmuramic acid and N-acetyl-D-glucosamine residues in a peptidoglycan and between N-acetyl-D-glucosamine residues in chitodextrins.. In terms of biological role, may not function as a self-defense protein, but as a digestive enzyme, probably in the gut of the insect body. Inactive towards Micrococcus luteus. Active toward glycol chitin. In Musca domestica (House fly), this protein is Lysozyme 1.